Reading from the N-terminus, the 317-residue chain is Cytochrome c biogenesis protein CcsA (317 aa).

Transmembrane regions (helical) follow at residues 17 to 37 (VVSI…IVGL), 44 to 64 (GMIV…IYSG), 71 to 91 (LYES…LPYL), 101 to 121 (ITSP…LTQI), 143 to 163 (MILS…LLVI), 223 to 243 (IISI…VWAN), 252 to 272 (WDPK…YLHI), and 284 to 304 (AIVA…INIL).

It belongs to the CcmF/CycK/Ccl1/NrfE/CcsA family. In terms of assembly, may interact with Ccs1.

Its subcellular location is the plastid. The protein localises to the chloroplast thylakoid membrane. Required during biogenesis of c-type cytochromes (cytochrome c6 and cytochrome f) at the step of heme attachment. This Pelargonium hortorum (Common geranium) protein is Cytochrome c biogenesis protein CcsA.